A 301-amino-acid polypeptide reads, in one-letter code: Pantothenate synthetase (301 aa).

An ATP-binding site is contributed by 30 to 37 (MGNLHEGH). His37 functions as the Proton donor in the catalytic mechanism. Gln61 serves as a coordination point for (R)-pantoate. Gln61 is a beta-alanine binding site. 149–152 (GEKD) contributes to the ATP binding site. Gln155 contacts (R)-pantoate. ATP is bound by residues Val178 and 186 to 189 (MSSR).

The protein belongs to the pantothenate synthetase family. In terms of assembly, homodimer.

It is found in the cytoplasm. It catalyses the reaction (R)-pantoate + beta-alanine + ATP = (R)-pantothenate + AMP + diphosphate + H(+). The protein operates within cofactor biosynthesis; (R)-pantothenate biosynthesis; (R)-pantothenate from (R)-pantoate and beta-alanine: step 1/1. Functionally, catalyzes the condensation of pantoate with beta-alanine in an ATP-dependent reaction via a pantoyl-adenylate intermediate. This chain is Pantothenate synthetase, found in Vibrio parahaemolyticus serotype O3:K6 (strain RIMD 2210633).